The following is a 436-amino-acid chain: MQVSVETTEGLGRRMTVQVPAERVENEVERRLKDLSGRVKMDGFRPGKVPVKVVRKQYGAQVRSEVLSEVVQQTYSEALEQESLRPAGNPHIEPKRTGEGEDLEYEASFDVLPEIEVAGLDQIQVERPQVEITDADLDNVLERLRKQHADYQEVDRAAQDEDRVVIDFHGTIDGEAFTGNSAEDAPLILGAGQLPEAFEQGLQGAKAGQELTVEHKFPDELAEPSIAGKTAVFQVTVKRVEEPQLPELDDDFAARLGIQEGGVEALREAVRGNLERERHQAVRQRLKRQVLDQLADQNELELPKSLIDGEIQALRQQSGASAEGELPESERSAYEDVASRRVKLGLLVNELVRSQGIQLDRERMMTQLREMAANSGQDPSEALQQIAQDRQMMQSLEASVIEEQVVDWLLEQVQTEDKTLSFDELMNSEDGDQASA.

Disordered regions lie at residues 1–26 and 81–100; these read MQVS…RVEN and QESL…TGEG. The region spanning 161-246 is the PPIase FKBP-type domain; it reads EDRVVIDFHG…VKRVEEPQLP (86 aa).

This sequence belongs to the FKBP-type PPIase family. Tig subfamily.

It is found in the cytoplasm. The catalysed reaction is [protein]-peptidylproline (omega=180) = [protein]-peptidylproline (omega=0). Its function is as follows. Involved in protein export. Acts as a chaperone by maintaining the newly synthesized protein in an open conformation. Functions as a peptidyl-prolyl cis-trans isomerase. This Halorhodospira halophila (strain DSM 244 / SL1) (Ectothiorhodospira halophila (strain DSM 244 / SL1)) protein is Trigger factor.